The sequence spans 650 residues: Phosphatidylinositol-3,5-bisphosphate 3-phosphatase MTMR14 (650 aa).

A disordered region spans residues 1–27; the sequence is MAGARAAAAAASAGSSASSGNQPPQEL. N6-acetyllysine is present on Lys194. An N-linked (GlcNAc...) asparagine glycan is attached at Asn226. Catalysis depends on Cys330, which acts as the Phosphocysteine intermediate. The a 1,2-diacyl-sn-glycero-3-phospho-(1D-myo-inositol-3,5-bisphosphate) site is built by Gly333, Trp334, Asp335, Arg336, and Arg382. Positions 333, 334, 335, 336, and 382 each coordinate a 1,2-diacyl-sn-glycero-3-phospho-(1D-myo-inositol-3-phosphate). The tract at residues 476–546 is disordered; that stretch reads AAWRKSHSSS…PRSVDHPLPG (71 aa). Residue Ser518 is modified to Phosphoserine. Asn519 is a glycosylation site (N-linked (GlcNAc...) asparagine). Phosphoserine occurs at positions 530, 580, and 624. Arg638 is subject to Omega-N-methylarginine.

Belongs to the protein-tyrosine phosphatase family. Non-receptor class myotubularin subfamily. In terms of tissue distribution, expressed in various tissues, including heart, skeletal muscle, placenta, liver, lung, kidney and pancreas.

It localises to the cytoplasm. It carries out the reaction a 1,2-diacyl-sn-glycero-3-phospho-(1D-myo-inositol-3,5-bisphosphate) + H2O = a 1,2-diacyl-sn-glycero-3-phospho-(1D-myo-inositol-5-phosphate) + phosphate. The enzyme catalyses a 1,2-diacyl-sn-glycero-3-phospho-(1D-myo-inositol-3-phosphate) + H2O = a 1,2-diacyl-sn-glycero-3-phospho-(1D-myo-inositol) + phosphate. In terms of biological role, lipid phosphatase that specifically dephosphorylates the D-3 position of phosphatidylinositol 3-phosphate and phosphatidylinositol 3,5-bisphosphate, generating phosphatidylinositol and phosphatidylinositol 5-phosphate. The polypeptide is Phosphatidylinositol-3,5-bisphosphate 3-phosphatase MTMR14 (Homo sapiens (Human)).